Here is a 423-residue protein sequence, read N- to C-terminus: Glutamate-1-semialdehyde 2,1-aminomutase (423 aa).

An N6-(pyridoxal phosphate)lysine modification is found at lysine 262.

It belongs to the class-III pyridoxal-phosphate-dependent aminotransferase family. HemL subfamily. Requires pyridoxal 5'-phosphate as cofactor.

The protein localises to the cytoplasm. The catalysed reaction is (S)-4-amino-5-oxopentanoate = 5-aminolevulinate. It participates in porphyrin-containing compound metabolism; protoporphyrin-IX biosynthesis; 5-aminolevulinate from L-glutamyl-tRNA(Glu): step 2/2. In Methanosphaera stadtmanae (strain ATCC 43021 / DSM 3091 / JCM 11832 / MCB-3), this protein is Glutamate-1-semialdehyde 2,1-aminomutase.